The chain runs to 180 residues: Large ribosomal subunit protein bL17 (180 aa).

The segment at 134 to 180 (AQAKAKKAAAMPTEESEAKPAEEGDVVGASEPDAKAPEEPPAEAPEN) is disordered.

Belongs to the bacterial ribosomal protein bL17 family. In terms of assembly, part of the 50S ribosomal subunit. Contacts protein L32.

The protein is Large ribosomal subunit protein bL17 of Mycobacterium tuberculosis (strain ATCC 25177 / H37Ra).